Consider the following 68-residue polypeptide: Large ribosomal subunit protein uL29 (68 aa).

It belongs to the universal ribosomal protein uL29 family.

In Pyrococcus horikoshii (strain ATCC 700860 / DSM 12428 / JCM 9974 / NBRC 100139 / OT-3), this protein is Large ribosomal subunit protein uL29 (rpl29).